Consider the following 653-residue polypeptide: UvrABC system protein C (653 aa).

One can recognise a GIY-YIG domain in the interval 44–122; the sequence is NAPGVYRMVN…IKRLRPRFNV (79 aa). Positions 232–267 constitute a UVR domain; sequence STVKAEIATAMQEASQALDFERAAIYRDRLAALSHV.

The protein belongs to the UvrC family. In terms of assembly, interacts with UvrB in an incision complex.

The protein resides in the cytoplasm. Functionally, the UvrABC repair system catalyzes the recognition and processing of DNA lesions. UvrC both incises the 5' and 3' sides of the lesion. The N-terminal half is responsible for the 3' incision and the C-terminal half is responsible for the 5' incision. The chain is UvrABC system protein C from Chelativorans sp. (strain BNC1).